The primary structure comprises 153 residues: Large ribosomal subunit protein uL13 (153 aa).

This sequence belongs to the universal ribosomal protein uL13 family. Part of the 50S ribosomal subunit.

In terms of biological role, this protein is one of the early assembly proteins of the 50S ribosomal subunit, although it is not seen to bind rRNA by itself. It is important during the early stages of 50S assembly. This is Large ribosomal subunit protein uL13 from Methylobacterium nodulans (strain LMG 21967 / CNCM I-2342 / ORS 2060).